A 181-amino-acid polypeptide reads, in one-letter code: Protein Ves (181 aa).

It belongs to the Ves family.

In Cronobacter sakazakii (strain ATCC BAA-894) (Enterobacter sakazakii), this protein is Protein Ves.